A 256-amino-acid polypeptide reads, in one-letter code: Cysteine-rich repeat secretory protein 42 (256 aa).

The signal sequence occupies residues 1 to 26; it reads MSSVFGSVHILAMIAIQLLLTHSVSS. 2 Gnk2-homologous domains span residues 33-136 and 142-253; these read YLHH…SVAS and YEND…LYPF.

The protein belongs to the cysteine-rich repeat secretory protein family.

The protein localises to the secreted. This is Cysteine-rich repeat secretory protein 42 (CRRSP42) from Arabidopsis thaliana (Mouse-ear cress).